We begin with the raw amino-acid sequence, 444 residues long: Acyl-CoA 6-desaturase (444 aa).

The Cytoplasmic portion of the chain corresponds to 1 to 130 (MGKGGNQGEG…EDMNLFKTNH (130 aa)). In terms of domain architecture, Cytochrome b5 heme-binding spans 18 to 95 (MPTFRWEEIQ…LKPLLIGELA (78 aa)). A helical membrane pass occupies residues 131-151 (LFFFLLLSHIIVMESIAWFIL). The Lumenal portion of the chain corresponds to 152 to 157 (SYFGNG). The chain crosses the membrane as a helical span at residues 158 to 178 (WIPTVITAFVLATSQAQAGWL). Residues 179 to 264 (QHDYGHLSVY…KYLPYNHQHE (86 aa)) lie on the Cytoplasmic side of the membrane. A Histidine box-1 motif is present at residues 180 to 184 (HDYGH). The short motif at 217–221 (HFQHH) is the Histidine box-2 element. The helical transmembrane segment at 265–285 (YFFLIGPPLLIPMYFQYQIIM) threads the bilayer. Over 286-305 (TMIRRRDWVDLAWAISYYAR) the chain is Lumenal. A helical transmembrane segment spans residues 306-326 (FFYTYIPFYGILGALVFLNFI). Residues 327–444 (RFLESHWFVW…ELWLDAYLHK (118 aa)) lie on the Cytoplasmic side of the membrane. A Histidine box-3 motif is present at residues 382 to 386 (QIEHH).

The protein belongs to the fatty acid desaturase type 1 family. Expressed in the liver and brain (at protein level). Highest activity is found in the liver and adrenals followed by the testes and other organs, absent in adipose tissue.

The protein resides in the endoplasmic reticulum membrane. Its subcellular location is the microsome membrane. It carries out the reaction (9Z,12Z)-octadecadienoyl-CoA + 2 Fe(II)-[cytochrome b5] + O2 + 2 H(+) = (6Z,9Z,12Z)-octadecatrienoyl-CoA + 2 Fe(III)-[cytochrome b5] + 2 H2O. The enzyme catalyses (9Z,12Z,15Z)-octadecatrienoyl-CoA + 2 Fe(II)-[cytochrome b5] + O2 + 2 H(+) = (6Z,9Z,12Z,15Z)-octadecatetraenoyl-CoA + 2 Fe(III)-[cytochrome b5] + 2 H2O. The catalysed reaction is (9Z,12Z,15Z,18Z,21Z)-tetracosapentaenoyl-CoA + 2 Fe(II)-[cytochrome b5] + O2 + 2 H(+) = (6Z,9Z,12Z,15Z,18Z,21Z)-tetracosahexaenoyl-CoA + 2 Fe(III)-[cytochrome b5] + 2 H2O. It catalyses the reaction (11E)-octadecenoyl-CoA + 2 Fe(II)-[cytochrome b5] + O2 + 2 H(+) = (6Z,11E)-octadecadienoyl-CoA + 2 Fe(III)-[cytochrome b5] + 2 H2O. It carries out the reaction (11Z,14Z)-eicosadienoyl-CoA + 2 Fe(II)-[cytochrome b5] + O2 + 2 H(+) = (8Z,11Z,14Z)-eicosatrienoyl-CoA + 2 Fe(III)-[cytochrome b5] + 2 H2O. The enzyme catalyses (11Z,14Z,17Z)-eicosatrienoyl-CoA + 2 Fe(II)-[cytochrome b5] + O2 + 2 H(+) = (8Z,11Z,14Z,17Z)-eicosatetraenoyl-CoA + 2 Fe(III)-[cytochrome b5] + 2 H2O. It functions in the pathway lipid metabolism; polyunsaturated fatty acid biosynthesis. Its function is as follows. Involved in the biosynthesis of highly unsaturated fatty acids (HUFA) from the essential polyunsaturated fatty acids (PUFA) linoleic acid (LA) (18:2n-6) and alpha-linolenic acid (ALA) (18:3n-3) precursors, acting as a fatty acyl-coenzyme A (CoA) desaturase that introduces a cis double bond at carbon 6 of the fatty acyl chain. Catalyzes the first and rate limiting step in this pathway which is the desaturation of LA (18:2n-6) and ALA (18:3n-3) into gamma-linoleate (GLA) (18:3n-6) and stearidonate (18:4n-3), respectively. Subsequently, in the biosynthetic pathway of HUFA n-3 series, it desaturates tetracosapentaenoate (24:5n-3) to tetracosahexaenoate (24:6n-3), which is then converted to docosahexaenoate (DHA)(22:6n-3), an important lipid for nervous system function. It can also desaturate (11E)-octadecenoate (trans-vaccenoate) at carbon 6 generating (6Z,11E)-octadecadienoate. In addition to Delta-6 activity, this enzyme exhibits Delta-8 activity with slight biases toward n-3 fatty acyl-CoA substrates. This chain is Acyl-CoA 6-desaturase (Fads2), found in Rattus norvegicus (Rat).